A 198-amino-acid chain; its full sequence is GTP-binding protein Di-Ras1 (198 aa).

GTP contacts are provided by residues 17-22, 33-39, 61-65, 121-125, Ala151, and 151-152; these read GVGKSS, RDTYIPT, DTTGS, NKCDE, and AK. The Effector region motif lies at 36-44; the sequence is YIPTIEDTY. Cys195 bears the Cysteine methyl ester mark. The S-geranylgeranyl cysteine moiety is linked to residue Cys195. Positions 196–198 are cleaved as a propeptide — removed in mature form; the sequence is ALM.

Belongs to the small GTPase superfamily. Di-Ras family.

The protein localises to the cell membrane. Displays low GTPase activity and exists predominantly in the GTP-bound form. This is GTP-binding protein Di-Ras1 (Diras1) from Mus musculus (Mouse).